The primary structure comprises 857 residues: uncharacterized protein (857 aa).

This is an uncharacterized protein from Bacillus subtilis (strain 168).